The sequence spans 67 residues: Protein AaeX (67 aa).

Transmembrane regions (helical) follow at residues 3–23 (VLPVVVVFGMSFPPIFIEIIV) and 43–63 (LVWHPALFNTALYCCLFYVVS).

Belongs to the AaeX family.

Its subcellular location is the cell membrane. This is Protein AaeX from Erwinia tasmaniensis (strain DSM 17950 / CFBP 7177 / CIP 109463 / NCPPB 4357 / Et1/99).